The primary structure comprises 421 residues: F-box protein At2g17690 (421 aa).

One can recognise an F-box domain in the interval 2-50 (GDWSKLPEELLGLIALRLYSVIELIRFRSICKSWRSSASGVNKNHSLSS).

Involved in heat stress response. Contributes to recovery from heat stress. This Arabidopsis thaliana (Mouse-ear cress) protein is F-box protein At2g17690.